The sequence spans 504 residues: 2,3-bisphosphoglycerate-independent phosphoglycerate mutase (504 aa).

Positions 11 and 61 each coordinate Mn(2+). The Phosphoserine intermediate role is filled by Ser61. Substrate-binding positions include His122, 152–153 (RD), Arg183, Arg189, 255–258 (RNDR), and Lys329. Residues Asp396, His400, Asp437, His438, and His455 each contribute to the Mn(2+) site.

Belongs to the BPG-independent phosphoglycerate mutase family. As to quaternary structure, monomer. Mn(2+) is required as a cofactor.

It carries out the reaction (2R)-2-phosphoglycerate = (2R)-3-phosphoglycerate. It functions in the pathway carbohydrate degradation; glycolysis; pyruvate from D-glyceraldehyde 3-phosphate: step 3/5. Catalyzes the interconversion of 2-phosphoglycerate and 3-phosphoglycerate. This Bacteroides fragilis (strain YCH46) protein is 2,3-bisphosphoglycerate-independent phosphoglycerate mutase.